A 145-amino-acid chain; its full sequence is Flagellar assembly factor FliW (145 aa).

This sequence belongs to the FliW family. In terms of assembly, interacts with translational regulator CsrA and flagellin(s).

Its subcellular location is the cytoplasm. Its function is as follows. Acts as an anti-CsrA protein, binds CsrA and prevents it from repressing translation of its target genes, one of which is flagellin. Binds to flagellin and participates in the assembly of the flagellum. This chain is Flagellar assembly factor FliW, found in Thermosipho africanus (strain TCF52B).